The following is a 101-amino-acid chain: Urease subunit beta (101 aa).

The protein belongs to the urease beta subunit family. Heterotrimer of UreA (gamma), UreB (beta) and UreC (alpha) subunits. Three heterotrimers associate to form the active enzyme.

It is found in the cytoplasm. It carries out the reaction urea + 2 H2O + H(+) = hydrogencarbonate + 2 NH4(+). It participates in nitrogen metabolism; urea degradation; CO(2) and NH(3) from urea (urease route): step 1/1. This Actinobacillus pleuropneumoniae serotype 5b (strain L20) protein is Urease subunit beta.